The following is a 417-amino-acid chain: MSSKYPRSVRCCLPLWALTLEAALILLFFFFTYYDASLEDQKGLVASYQVCQDLTVMAVLGLGFFTSNLRRNSWSSVAFNLFLLALGVQWAILLDGFLSQFSPGKVVIKLFSIRLATRSTTSMLISMNAVLGKVNLAQLVVMELVELTVFGTMRIVIYNIFKIDYGMNMMHIHVFAAYFGLTVAWCLPKPLPKGTEDKYQTTTSPSLFAMLGTLFLWMFWPTFNSALLLNPIERKNAVFSTYYALAVSAVTAISVSSLAHPQRKINMTYMPNAGLAGGVAVGASCHVIHSPWIAMVLGLVAGLISFGGAKCLPVCFNRVLGIHESHSMHYTFGLPALLGEITYIVLMALRVFWASSNMIGFQVLLSTGTLSLAMAMSITSGLLTGLLLNLKIWKGPHVAKYFDDQAFWEFPHLAVGF.

Transmembrane regions (helical) follow at residues 12-32 (CLPL…FFFT), 44-64 (LVAS…GLGF), 77-97 (VAFN…LDGF), 125-145 (ISMN…MELV), 172-192 (IHVF…KPLP), 203-223 (TSPS…WPTF), 238-258 (VFST…VSSL), 265-285 (INMT…GASC), 287-307 (VIHS…ISFG), 331-351 (TFGL…ALRV), and 358-378 (MIGF…AMSI).

It belongs to the ammonium transporter (TC 2.A.49) family. Rh subfamily.

The protein localises to the membrane. May be part of an oligomeric complex which is likely to have a transport or channel function in the erythrocyte membrane. The sequence is that of RH-like protein from Macaca fascicularis (Crab-eating macaque).